Reading from the N-terminus, the 184-residue chain is Large ribosomal subunit protein bL17 (184 aa).

The segment at 126–184 (TRAARAAASKQTADEAQVEETPAEEVTEETAAEETTEAAQADEAPAEEAPVEEKKDEEK) is disordered. Residues 141–161 (AQVEETPAEEVTEETAAEETT) are compositionally biased toward acidic residues.

This sequence belongs to the bacterial ribosomal protein bL17 family. In terms of assembly, part of the 50S ribosomal subunit. Contacts protein L32.

This Corynebacterium efficiens (strain DSM 44549 / YS-314 / AJ 12310 / JCM 11189 / NBRC 100395) protein is Large ribosomal subunit protein bL17.